We begin with the raw amino-acid sequence, 157 residues long: Protein-export protein SecB (157 aa).

The protein belongs to the SecB family. In terms of assembly, homotetramer, a dimer of dimers. One homotetramer interacts with 1 SecA dimer.

Its subcellular location is the cytoplasm. One of the proteins required for the normal export of preproteins out of the cell cytoplasm. It is a molecular chaperone that binds to a subset of precursor proteins, maintaining them in a translocation-competent state. It also specifically binds to its receptor SecA. This chain is Protein-export protein SecB, found in Methylobacillus flagellatus (strain ATCC 51484 / DSM 6875 / VKM B-1610 / KT).